The following is a 358-amino-acid chain: Anhydro-N-acetylmuramic acid kinase (358 aa).

Residue 9-16 (GTSLDGVD) participates in ATP binding.

It belongs to the anhydro-N-acetylmuramic acid kinase family.

It catalyses the reaction 1,6-anhydro-N-acetyl-beta-muramate + ATP + H2O = N-acetyl-D-muramate 6-phosphate + ADP + H(+). Its pathway is amino-sugar metabolism; 1,6-anhydro-N-acetylmuramate degradation. The protein operates within cell wall biogenesis; peptidoglycan recycling. Functionally, catalyzes the specific phosphorylation of 1,6-anhydro-N-acetylmuramic acid (anhMurNAc) with the simultaneous cleavage of the 1,6-anhydro ring, generating MurNAc-6-P. Is required for the utilization of anhMurNAc either imported from the medium or derived from its own cell wall murein, and thus plays a role in cell wall recycling. This is Anhydro-N-acetylmuramic acid kinase from Acidiphilium cryptum (strain JF-5).